Consider the following 582-residue polypeptide: Sulfite reductase [NADPH] hemoprotein beta-component (582 aa).

A compositionally biased stretch (basic and acidic residues) spans 1–12 (MDLKVKVDRSRD). The segment at 1–26 (MDLKVKVDRSRDVSQPLDKLGPDETL) is disordered. Residues Cys-447, Cys-453, Cys-492, and Cys-496 each coordinate [4Fe-4S] cluster. A siroheme-binding site is contributed by Cys-496.

The protein belongs to the nitrite and sulfite reductase 4Fe-4S domain family. As to quaternary structure, alpha(8)-beta(8). The alpha component is a flavoprotein, the beta component is a hemoprotein. Requires siroheme as cofactor. It depends on [4Fe-4S] cluster as a cofactor.

It catalyses the reaction hydrogen sulfide + 3 NADP(+) + 3 H2O = sulfite + 3 NADPH + 4 H(+). The protein operates within sulfur metabolism; hydrogen sulfide biosynthesis; hydrogen sulfide from sulfite (NADPH route): step 1/1. Functionally, component of the sulfite reductase complex that catalyzes the 6-electron reduction of sulfite to sulfide. This is one of several activities required for the biosynthesis of L-cysteine from sulfate. The chain is Sulfite reductase [NADPH] hemoprotein beta-component from Afipia carboxidovorans (strain ATCC 49405 / DSM 1227 / KCTC 32145 / OM5) (Oligotropha carboxidovorans).